Reading from the N-terminus, the 61-residue chain is Small ribosomal subunit protein uS14 (61 aa).

Residues 1–12 (MSESETTDEPDS) show a composition bias toward acidic residues. Positions 1-25 (MSESETTDEPDSETASSERTGQLES) are disordered. Zn(2+) is bound by residues cysteine 26, cysteine 29, cysteine 44, and cysteine 47.

It belongs to the universal ribosomal protein uS14 family. Zinc-binding uS14 subfamily. In terms of assembly, part of the 30S ribosomal subunit. It depends on Zn(2+) as a cofactor.

In terms of biological role, binds 16S rRNA, required for the assembly of 30S particles. The protein is Small ribosomal subunit protein uS14 of Haloarcula marismortui (strain ATCC 43049 / DSM 3752 / JCM 8966 / VKM B-1809) (Halobacterium marismortui).